The primary structure comprises 636 residues: Chaperone protein HtpG (636 aa).

Positions 1–329 (MSKEHGAAAE…TEDLPLNISR (329 aa)) are a; substrate-binding. The b stretch occupies residues 330–550 (ETLQENALIA…DGGMTASMEK (221 aa)). The interval 551 to 636 (LMRVMNKDES…TGWYAEVRKL (86 aa)) is c.

Belongs to the heat shock protein 90 family. In terms of assembly, homodimer.

Its subcellular location is the cytoplasm. Molecular chaperone. Has ATPase activity. This Oleidesulfovibrio alaskensis (strain ATCC BAA-1058 / DSM 17464 / G20) (Desulfovibrio alaskensis) protein is Chaperone protein HtpG.